The following is a 569-amino-acid chain: CTP synthase (569 aa).

An amidoligase domain region spans residues 1 to 272 (MARPKNVKHI…DSRVLKKLGI (272 aa)). Ser18 is a CTP binding site. Residue Ser18 participates in UTP binding. 19–24 (SLGKGI) is an ATP binding site. Residue Tyr59 participates in L-glutamine binding. Asp76 provides a ligand contact to ATP. Mg(2+) is bound by residues Asp76 and Glu146. CTP-binding positions include 153-155 (DIE), 193-198 (KTKPTQ), and Lys229. UTP contacts are provided by residues 193–198 (KTKPTQ) and Lys229. Residues 299–543 (TIGICGKYTE…VAAAKDYARG (245 aa)) enclose the Glutamine amidotransferase type-1 domain. Gly363 contacts L-glutamine. Cys390 (nucleophile; for glutamine hydrolysis) is an active-site residue. L-glutamine contacts are provided by residues 391-394 (LGMQ), Glu414, and Arg471. Residues His516 and Glu518 contribute to the active site.

Belongs to the CTP synthase family. As to quaternary structure, homotetramer.

The enzyme catalyses UTP + L-glutamine + ATP + H2O = CTP + L-glutamate + ADP + phosphate + 2 H(+). It catalyses the reaction L-glutamine + H2O = L-glutamate + NH4(+). The catalysed reaction is UTP + NH4(+) + ATP = CTP + ADP + phosphate + 2 H(+). It functions in the pathway pyrimidine metabolism; CTP biosynthesis via de novo pathway; CTP from UDP: step 2/2. With respect to regulation, allosterically activated by GTP, when glutamine is the substrate; GTP has no effect on the reaction when ammonia is the substrate. The allosteric effector GTP functions by stabilizing the protein conformation that binds the tetrahedral intermediate(s) formed during glutamine hydrolysis. Inhibited by the product CTP, via allosteric rather than competitive inhibition. Its function is as follows. Catalyzes the ATP-dependent amination of UTP to CTP with either L-glutamine or ammonia as the source of nitrogen. Regulates intracellular CTP levels through interactions with the four ribonucleotide triphosphates. The polypeptide is CTP synthase (Chlorobium chlorochromatii (strain CaD3)).